A 408-amino-acid polypeptide reads, in one-letter code: Putative UPF0496 protein 2 (408 aa).

2 helical membrane-spanning segments follow: residues 224-244 (RIARGTAAAALVGACAAAIVA) and 252-272 (ALVGIGVAAAAFGATPAGAAR). The tract at residues 385-408 (MARGLPPPSPATVTTTSEERLTSS) is disordered.

Belongs to the UPF0496 family.

Its subcellular location is the membrane. The polypeptide is Putative UPF0496 protein 2 (Oryza sativa subsp. japonica (Rice)).